The following is a 468-amino-acid chain: UDP-N-acetylmuramoyl-L-alanine--L-glutamate ligase (468 aa).

122-128 (GTKGKST) contributes to the ATP binding site.

This sequence belongs to the MurCDEF family. MurD2 subfamily.

The protein localises to the cytoplasm. The enzyme catalyses UDP-N-acetyl-alpha-D-muramoyl-L-alanine + L-glutamate + ATP = UDP-N-acetyl-alpha-D-muramoyl-L-alanyl-L-glutamate + ADP + phosphate + H(+). It participates in cell wall biogenesis; peptidoglycan biosynthesis. In terms of biological role, cell wall formation. Catalyzes the addition of L-glutamate to the nucleotide precursor UDP-N-acetylmuramoyl-L-alanine. The polypeptide is UDP-N-acetylmuramoyl-L-alanine--L-glutamate ligase (Xylella fastidiosa (strain Temecula1 / ATCC 700964)).